The sequence spans 431 residues: Ribonuclease TTHA0252 (431 aa).

Zn(2+) contacts are provided by His59, His61, Asp63, His64, His141, Asp162, and His400.

It belongs to the metallo-beta-lactamase superfamily. RNA-metabolizing metallo-beta-lactamase-like family. Monomer. Zn(2+) is required as a cofactor.

The protein resides in the cytoplasm. Its activity is regulated as follows. Inhibited by cadmium, cobalt, manganese, magnesium, calcium and nickel ions. Its function is as follows. Has endoribonuclease activity towards 23S and 16S rRNA (in vitro). The chain is Ribonuclease TTHA0252 from Thermus thermophilus (strain ATCC 27634 / DSM 579 / HB8).